The sequence spans 213 residues: Small ribosomal subunit protein uS5 (213 aa).

Residues 49–112 form the S5 DRBM domain; it reads LEEEVMDVNL…DNAKYNLIKV (64 aa).

This sequence belongs to the universal ribosomal protein uS5 family. Part of the 30S ribosomal subunit. Contacts protein S4.

In terms of biological role, with S4 and S12 plays an important role in translational accuracy. The polypeptide is Small ribosomal subunit protein uS5 (Methanobrevibacter smithii (strain ATCC 35061 / DSM 861 / OCM 144 / PS)).